Here is a 164-residue protein sequence, read N- to C-terminus: S-ribosylhomocysteine lyase (164 aa).

3 residues coordinate Fe cation: His-54, His-58, and Cys-128.

This sequence belongs to the LuxS family. As to quaternary structure, homodimer. Requires Fe cation as cofactor.

It carries out the reaction S-(5-deoxy-D-ribos-5-yl)-L-homocysteine = (S)-4,5-dihydroxypentane-2,3-dione + L-homocysteine. Its function is as follows. Involved in the synthesis of autoinducer 2 (AI-2) which is secreted by bacteria and is used to communicate both the cell density and the metabolic potential of the environment. The regulation of gene expression in response to changes in cell density is called quorum sensing. Catalyzes the transformation of S-ribosylhomocysteine (RHC) to homocysteine (HC) and 4,5-dihydroxy-2,3-pentadione (DPD). The protein is S-ribosylhomocysteine lyase of Campylobacter hominis (strain ATCC BAA-381 / DSM 21671 / CCUG 45161 / LMG 19568 / NCTC 13146 / CH001A).